Here is a 362-residue protein sequence, read N- to C-terminus: Peptide chain release factor 1 (362 aa).

Gln-237 is modified (N5-methylglutamine).

The protein belongs to the prokaryotic/mitochondrial release factor family. Post-translationally, methylated by PrmC. Methylation increases the termination efficiency of RF1.

Its subcellular location is the cytoplasm. In terms of biological role, peptide chain release factor 1 directs the termination of translation in response to the peptide chain termination codons UAG and UAA. This Vibrio vulnificus (strain CMCP6) protein is Peptide chain release factor 1.